The sequence spans 119 residues: Large ribosomal subunit protein bL20 (119 aa).

Belongs to the bacterial ribosomal protein bL20 family.

In terms of biological role, binds directly to 23S ribosomal RNA and is necessary for the in vitro assembly process of the 50S ribosomal subunit. It is not involved in the protein synthesizing functions of that subunit. This Bacillus pumilus (strain SAFR-032) protein is Large ribosomal subunit protein bL20.